Consider the following 253-residue polypeptide: Triosephosphate isomerase, cytosolic (253 aa).

Substrate-binding residues include asparagine 10 and lysine 12. The Electrophile role is filled by histidine 96. The active-site Proton acceptor is glutamate 166.

It belongs to the triosephosphate isomerase family. As to quaternary structure, homodimer. In terms of tissue distribution, starchy endosperm.

The protein localises to the cytoplasm. The enzyme catalyses D-glyceraldehyde 3-phosphate = dihydroxyacetone phosphate. It participates in carbohydrate biosynthesis; gluconeogenesis. The protein operates within carbohydrate degradation; glycolysis; D-glyceraldehyde 3-phosphate from glycerone phosphate: step 1/1. This chain is Triosephosphate isomerase, cytosolic, found in Hordeum vulgare (Barley).